The following is a 211-amino-acid chain: Large ribosomal subunit protein uL4 (211 aa).

Residues E44 to F90 are disordered. Positions G60–K72 are enriched in basic residues.

The protein belongs to the universal ribosomal protein uL4 family. As to quaternary structure, part of the 50S ribosomal subunit.

Functionally, one of the primary rRNA binding proteins, this protein initially binds near the 5'-end of the 23S rRNA. It is important during the early stages of 50S assembly. It makes multiple contacts with different domains of the 23S rRNA in the assembled 50S subunit and ribosome. Forms part of the polypeptide exit tunnel. The chain is Large ribosomal subunit protein uL4 from Ureaplasma urealyticum serovar 10 (strain ATCC 33699 / Western).